The chain runs to 299 residues: Capsid protein (299 aa).

The interval 1–46 (MPPKVAPESSDAVSSQEQPQRPPPATPPVPTPPPGRREEVGDRAED) is disordered. Residues 20-34 (QRPPPATPPVPTPPP) are compositionally biased toward pro residues. The segment covering 35–46 (GRREEVGDRAED) has biased composition (basic and acidic residues).

It belongs to the potexviruses coat protein family.

Its subcellular location is the virion. Its function is as follows. Required for genome encapsidation. Forms ribonucleoprotein complexes along with TGB1 helicase and viral RNA. This Helenium virus S (HelVS) protein is Capsid protein.